The primary structure comprises 206 residues: CASP-like protein 1F1 (206 aa).

At 1–43 the chain is on the cytoplasmic side; that stretch reads MCFQFSILYTCYLAHFGVFPRKYLVMAGIEAKFQQNPPLGTHK. Residues 44-64 form a helical membrane-spanning segment; the sequence is LFLGAHICLRILTVTATLTAA. At 65–92 the chain is on the extracellular side; that stretch reads WMMITSKQTVEVYGIQVEAKYSYSSAFK. A helical membrane pass occupies residues 93–113; sequence FFSYANAIACGCSVLTLFPAF. At 114–124 the chain is on the cytoplasmic side; the sequence is SLFYRGSTPMK. The helical transmembrane segment at 125 to 145 threads the bilayer; it reads FFFLFLHDLCMMSLVLAGCAA. At 146-177 the chain is on the extracellular side; the sequence is ATAIGYVGRYGNNHAGWMAICDQFDEYCNRIR. Residues 178–198 form a helical membrane-spanning segment; the sequence is LSLMFSYLAFVFILMLTIMSA. The Cytoplasmic segment spans residues 199-206; that stretch reads NKSREIRV.

The protein belongs to the Casparian strip membrane proteins (CASP) family. Homodimer and heterodimers.

The protein resides in the cell membrane. In Vitis vinifera (Grape), this protein is CASP-like protein 1F1.